The following is a 171-amino-acid chain: Crossover junction endodeoxyribonuclease RuvC (171 aa).

Catalysis depends on residues Asp7, Glu67, and Asp139. 3 residues coordinate Mg(2+): Asp7, Glu67, and Asp139.

The protein belongs to the RuvC family. Homodimer which binds Holliday junction (HJ) DNA. The HJ becomes 2-fold symmetrical on binding to RuvC with unstacked arms; it has a different conformation from HJ DNA in complex with RuvA. In the full resolvosome a probable DNA-RuvA(4)-RuvB(12)-RuvC(2) complex forms which resolves the HJ. The cofactor is Mg(2+).

It is found in the cytoplasm. It catalyses the reaction Endonucleolytic cleavage at a junction such as a reciprocal single-stranded crossover between two homologous DNA duplexes (Holliday junction).. The RuvA-RuvB-RuvC complex processes Holliday junction (HJ) DNA during genetic recombination and DNA repair. Endonuclease that resolves HJ intermediates. Cleaves cruciform DNA by making single-stranded nicks across the HJ at symmetrical positions within the homologous arms, yielding a 5'-phosphate and a 3'-hydroxyl group; requires a central core of homology in the junction. The consensus cleavage sequence is 5'-(A/T)TT(C/G)-3'. Cleavage occurs on the 3'-side of the TT dinucleotide at the point of strand exchange. HJ branch migration catalyzed by RuvA-RuvB allows RuvC to scan DNA until it finds its consensus sequence, where it cleaves and resolves the cruciform DNA. The sequence is that of Crossover junction endodeoxyribonuclease RuvC from Geotalea uraniireducens (strain Rf4) (Geobacter uraniireducens).